The primary structure comprises 327 residues: L-lactate dehydrogenase (327 aa).

NAD(+) contacts are provided by residues Val18, Asp39, Arg44, Tyr69, and 83 to 84 (GL). Substrate is bound by residues Gln86, Arg92, and 124–127 (NPVD). NAD(+) is bound by residues 122–124 (AAN) and Ser147. 152-155 (DSAR) is a substrate binding site. Residues Arg157 and His172 each contribute to the beta-D-fructose 1,6-bisphosphate site. His179 serves as the catalytic Proton acceptor. The residue at position 224 (Tyr224) is a Phosphotyrosine. Residue Thr233 coordinates substrate.

Belongs to the LDH/MDH superfamily. LDH family. Homotetramer.

It localises to the cytoplasm. It catalyses the reaction (S)-lactate + NAD(+) = pyruvate + NADH + H(+). It participates in fermentation; pyruvate fermentation to lactate; (S)-lactate from pyruvate: step 1/1. Allosterically activated by fructose 1,6-bisphosphate (FBP). Its function is as follows. Catalyzes the conversion of lactate to pyruvate. This chain is L-lactate dehydrogenase, found in Streptococcus suis (strain 98HAH33).